The primary structure comprises 573 residues: MASTEGANNMPKQVEVRMHDSHLSSEEPKHRNLGMRMCDKLGKNLLLSLTVFGVILGAVCGGLLRLAAPIHPDVVMLIAFPGDILMRMLKMLILPLIISSLITGLSGLDAKASGRLGTRAMVYYMSTTIIAAVLGVILVLAIHPGNPKLKKQLGPGKKNDEVSSLDAFLDLIRNLFPENLVQACFQQIQTVTKKVLVAPPSEEANTTKAVISLLNETMNEAPEETKIVIKKGLEFKDGMNVLGLIGFFIAFGIAMGKMGEQAKLMVEFFNILNEIVMKLVIMIMWYSPLGIACLICGKIIAIKDLEVVARQLGMYMITVIVGLIIHGGIFLPLIYFVVTRKNPFSFFAGIFQAWITALGTASSAGTLPVTFRCLEDNLGIDKRVTRFVLPVGATINMDGTALYEAVAAIFIAQMNGVILDGGQIVTVSLTATLASIGAASIPSAGLVTMLLILTAVGLPTEDISLLVAVDWLLDRMRTSVNVVGDSFGAGIVYHLSKSELDTIDSQHRMHEDIEMTKTQSVYDDTKNHRESNSNQCVYAAHNSVVIDECKVTLAANGKSADCSVEEEPWKREK.

The span at 1 to 11 (MASTEGANNMP) shows a compositional bias: polar residues. Positions 1 to 29 (MASTEGANNMPKQVEVRMHDSHLSSEEPK) are disordered. Topologically, residues 1-44 (MASTEGANNMPKQVEVRMHDSHLSSEEPKHRNLGMRMCDKLGKN) are cytoplasmic. Serine 3, serine 21, serine 24, and serine 25 each carry phosphoserine. Residues 14 to 29 (VEVRMHDSHLSSEEPK) show a composition bias toward basic and acidic residues. Residue cysteine 38 is the site of S-palmitoyl cysteine attachment. 3 helical membrane-spanning segments follow: residues 45–64 (LLLSLTVFGVILGAVCGGLL), 88–108 (MLKMLILPLIISSLITGLSGL), and 121–142 (MVYYMSTTIIAAVLGVILVLAI). N-linked (GlcNAc...) asparagine glycans are attached at residues asparagine 205 and asparagine 215. Helical transmembrane passes span 235-258 (FKDGMNVLGLIGFFIAFGIAMGKM), 268-295 (FFNILNEIVMKLVIMIMWYSPLGIACLI), and 317-338 (ITVIVGLIIHGGIFLPLIYFVV). An intramembrane region (discontinuously helical) is located at residues 344–374 (FSFFAGIFQAWITALGTASSAGTLPVTFRCL). L-aspartate is bound at residue 361 to 363 (ASS). Residues 384–410 (VTRFVLPVGATINMDGTALYEAVAAIF) traverse the membrane as a helical segment. The Na(+) site is built by glycine 392, threonine 394, and asparagine 396. Residues threonine 400, 441–445 (IPSAG), aspartate 474, and asparagine 481 each bind L-aspartate. Positions 424–457 (IVTVSLTATLASIGAASIPSAGLVTMLLILTAVG) form an intramembrane region, discontinuously helical. Residues 471 to 492 (WLLDRMRTSVNVVGDSFGAGIV) traverse the membrane as a helical segment. Na(+) is bound by residues asparagine 481 and aspartate 485. Phosphoserine occurs at positions 505, 520, 531, and 533. Tyrosine 538 carries the post-translational modification Phosphotyrosine. A phosphoserine mark is found at serine 543, serine 559, and serine 563.

The protein belongs to the dicarboxylate/amino acid:cation symporter (DAACS) (TC 2.A.23) family. SLC1A2 subfamily. As to quaternary structure, homotrimer. Interacts with AJUBA. Glycosylated. In terms of processing, palmitoylation at Cys-38 is not required for correct subcellular localization, but is important for glutamate uptake activity. As to expression, localized in brain and is highly enriched in the Purkinje cell layer in cerebellum.

It localises to the cell membrane. The catalysed reaction is K(+)(in) + L-glutamate(out) + 3 Na(+)(out) + H(+)(out) = K(+)(out) + L-glutamate(in) + 3 Na(+)(in) + H(+)(in). It carries out the reaction D-aspartate(out) + K(+)(in) + 3 Na(+)(out) + H(+)(out) = D-aspartate(in) + K(+)(out) + 3 Na(+)(in) + H(+)(in). It catalyses the reaction K(+)(in) + L-aspartate(out) + 3 Na(+)(out) + H(+)(out) = K(+)(out) + L-aspartate(in) + 3 Na(+)(in) + H(+)(in). Sodium-dependent, high-affinity amino acid transporter that mediates the uptake of L-glutamate and also L-aspartate and D-aspartate. Functions as a symporter that transports one amino acid molecule together with two or three Na(+) ions and one proton, in parallel with the counter-transport of one K(+) ion. Mediates Cl(-) flux that is not coupled to amino acid transport; this avoids the accumulation of negative charges due to aspartate and Na(+) symport. Essential for the rapid removal of released glutamate from the synaptic cleft, and for terminating the postsynaptic action of glutamate. In Rattus norvegicus (Rat), this protein is Excitatory amino acid transporter 2 (Slc1a2).